We begin with the raw amino-acid sequence, 210 residues long: Ribonuclease HII (210 aa).

Residues 16–207 (AIVVGVDEVG…VKKCIISTKN (192 aa)) enclose the RNase H type-2 domain. Residues aspartate 22, glutamate 23, and aspartate 116 each coordinate a divalent metal cation.

This sequence belongs to the RNase HII family. Mn(2+) is required as a cofactor. Requires Mg(2+) as cofactor.

The protein localises to the cytoplasm. It carries out the reaction Endonucleolytic cleavage to 5'-phosphomonoester.. Endonuclease that specifically degrades the RNA of RNA-DNA hybrids. This chain is Ribonuclease HII, found in Anaplasma phagocytophilum (strain HZ).